Consider the following 713-residue polypeptide: Subtilisin-like protease SBT4.9 (713 aa).

Positions M1–A24 are cleaved as a signal peptide. Residues V25–Q113 constitute a propeptide, activation peptide. Residues V34–L112 form the Inhibitor I9 domain. The Peptidase S8 domain maps to S117 to I560. D145 functions as the Charge relay system in the catalytic mechanism. The N-linked (GlcNAc...) asparagine glycan is linked to N176. H200 acts as the Charge relay system in catalysis. 2 N-linked (GlcNAc...) asparagine glycosylation sites follow: N215 and N223. Positions N356 to V415 constitute a PA domain. N420 is a glycosylation site (N-linked (GlcNAc...) asparagine). The active-site Charge relay system is the S499. N-linked (GlcNAc...) asparagine glycans are attached at residues N536, N583, N627, and N637.

Belongs to the peptidase S8 family. The C-terminal propeptide is autocleaved.

It is found in the secreted. This chain is Subtilisin-like protease SBT4.9, found in Arabidopsis thaliana (Mouse-ear cress).